The chain runs to 100 residues: uncharacterized protein (100 aa).

This is an uncharacterized protein from Acanthamoeba polyphaga mimivirus (APMV).